A 666-amino-acid polypeptide reads, in one-letter code: DNA ligase (666 aa).

Residues 34-38 (DEEYD), 83-84 (SL), and Glu-114 contribute to the NAD(+) site. The active-site N6-AMP-lysine intermediate is Lys-116. 4 residues coordinate NAD(+): Arg-137, Glu-174, Lys-290, and Lys-314. The Zn(2+) site is built by Cys-408, Cys-411, Cys-424, and Cys-429. The BRCT domain occupies 584 to 666 (SIEGPLKGLT…LKMVKREHNG (83 aa)).

It belongs to the NAD-dependent DNA ligase family. LigA subfamily. Mg(2+) is required as a cofactor. The cofactor is Mn(2+).

It catalyses the reaction NAD(+) + (deoxyribonucleotide)n-3'-hydroxyl + 5'-phospho-(deoxyribonucleotide)m = (deoxyribonucleotide)n+m + AMP + beta-nicotinamide D-nucleotide.. DNA ligase that catalyzes the formation of phosphodiester linkages between 5'-phosphoryl and 3'-hydroxyl groups in double-stranded DNA using NAD as a coenzyme and as the energy source for the reaction. It is essential for DNA replication and repair of damaged DNA. The polypeptide is DNA ligase (Coprothermobacter proteolyticus (strain ATCC 35245 / DSM 5265 / OCM 4 / BT)).